The following is an 854-amino-acid chain: DNA gyrase subunit A (854 aa).

The Topo IIA-type catalytic domain occupies 42 to 510 (LPEVRDGLKP…ADGQVSDEDL (469 aa)). The O-(5'-phospho-DNA)-tyrosine intermediate role is filled by Tyr129. Positions 537–543 (QKRGGKG) match the GyrA-box motif.

This sequence belongs to the type II topoisomerase GyrA/ParC subunit family. In terms of assembly, heterotetramer, composed of two GyrA and two GyrB chains. In the heterotetramer, GyrA contains the active site tyrosine that forms a transient covalent intermediate with DNA, while GyrB binds cofactors and catalyzes ATP hydrolysis.

It localises to the cytoplasm. The catalysed reaction is ATP-dependent breakage, passage and rejoining of double-stranded DNA.. With respect to regulation, DNA supercoiling is inhibited by the coumarin antibiotic novobiocin. Also inhibited by the fluoroquinolones ciprofloxacin and moxifloxacin. In terms of biological role, a type II topoisomerase that negatively supercoils closed circular double-stranded (ds) DNA in an ATP-dependent manner to modulate DNA topology and maintain chromosomes in an underwound state; also catalyzes the interconversion of other topological isomers of double-stranded DNA rings, including catenanes. At comparable concentrations has a stronger decatenation activity than E.coli, which is inhibited by ciprofloxacin and novobiocin. Cleaves dsDNA at the sequence 5'-AT/GGCC-3', leaving a 4 base overhang. Relaxes negatively supercoiled DNA in an ATP-independent manner. Functionally, negative supercoiling favors strand separation, and DNA replication, transcription, recombination and repair, all of which involve strand separation. Type II topoisomerases break and join 2 DNA strands simultaneously in an ATP-dependent manner. The protein is DNA gyrase subunit A of Mycolicibacterium smegmatis (Mycobacterium smegmatis).